Consider the following 708-residue polypeptide: Polyribonucleotide nucleotidyltransferase (708 aa).

Positions 490 and 496 each coordinate Mg(2+). The 63-residue stretch at 557 to 619 folds into the KH domain; sequence PRIETMTIPK…KSIDDAIRLI (63 aa). An S1 motif domain is found at 629 to 699; the sequence is GEVYKGKVRS…KTGKFKLSRK (71 aa).

This sequence belongs to the polyribonucleotide nucleotidyltransferase family. It depends on Mg(2+) as a cofactor.

Its subcellular location is the cytoplasm. It carries out the reaction RNA(n+1) + phosphate = RNA(n) + a ribonucleoside 5'-diphosphate. Involved in mRNA degradation. Catalyzes the phosphorolysis of single-stranded polyribonucleotides processively in the 3'- to 5'-direction. The protein is Polyribonucleotide nucleotidyltransferase of Bacteroides fragilis (strain ATCC 25285 / DSM 2151 / CCUG 4856 / JCM 11019 / LMG 10263 / NCTC 9343 / Onslow / VPI 2553 / EN-2).